The following is a 249-amino-acid chain: ATP synthase subunit a, chloroplastic (249 aa).

The next 5 helical transmembrane spans lie at Gln-40–Ile-60, Val-97–Leu-117, Ile-136–Ser-156, Leu-201–Leu-221, and Gly-222–Gly-242.

Belongs to the ATPase A chain family. In terms of assembly, F-type ATPases have 2 components, CF(1) - the catalytic core - and CF(0) - the membrane proton channel. CF(1) has five subunits: alpha(3), beta(3), gamma(1), delta(1), epsilon(1). CF(0) has four main subunits: a, b, b' and c.

The protein localises to the plastid. Its subcellular location is the chloroplast thylakoid membrane. In terms of biological role, key component of the proton channel; it plays a direct role in the translocation of protons across the membrane. In Lepidium virginicum (Virginia pepperweed), this protein is ATP synthase subunit a, chloroplastic.